Consider the following 168-residue polypeptide: Photosystem I assembly protein Ycf3 (168 aa).

3 TPR repeats span residues 35-68 (AFTY…EIDP), 72-105 (SYIL…NPFL), and 120-153 (GEQA…TPGN).

This sequence belongs to the Ycf3 family.

The protein localises to the plastid. It localises to the chloroplast thylakoid membrane. Functionally, essential for the assembly of the photosystem I (PSI) complex. May act as a chaperone-like factor to guide the assembly of the PSI subunits. The chain is Photosystem I assembly protein Ycf3 from Chloranthus spicatus (Chulantree).